The chain runs to 450 residues: Glucose-6-phosphate isomerase (450 aa).

The active-site Proton donor is Glu290. Active-site residues include His311 and Lys425.

It belongs to the GPI family.

The protein localises to the cytoplasm. It carries out the reaction alpha-D-glucose 6-phosphate = beta-D-fructose 6-phosphate. The protein operates within carbohydrate biosynthesis; gluconeogenesis. Its pathway is carbohydrate degradation; glycolysis; D-glyceraldehyde 3-phosphate and glycerone phosphate from D-glucose: step 2/4. In terms of biological role, catalyzes the reversible isomerization of glucose-6-phosphate to fructose-6-phosphate. The sequence is that of Glucose-6-phosphate isomerase from Lactiplantibacillus plantarum (strain ATCC BAA-793 / NCIMB 8826 / WCFS1) (Lactobacillus plantarum).